Reading from the N-terminus, the 165-residue chain is Protein SprT (165 aa).

The region spanning 20 to 163 (EKLAQANLKL…RCVHCGEQLV (144 aa)) is the SprT-like domain. Histidine 78 is a Zn(2+) binding site. The active site involves glutamate 79. Residue histidine 82 coordinates Zn(2+).

Belongs to the SprT family. The cofactor is Zn(2+).

The protein resides in the cytoplasm. This chain is Protein SprT, found in Escherichia coli O127:H6 (strain E2348/69 / EPEC).